Consider the following 349-residue polypeptide: Peroxidase 23 (349 aa).

A signal peptide spans 1–29 (MGFSSSLSCSAMGALIVGCLLLQASNSNA). A Pyrrolidone carboxylic acid modification is found at Gln30. Disulfide bonds link Cys40–Cys120, Cys73–Cys78, Cys126–Cys329, and Cys206–Cys238. The active-site Proton acceptor is His71. Ca(2+) is bound by residues Asp72, Val75, Gly77, Asp79, and Ser81. N-linked (GlcNAc...) asparagine glycosylation occurs at Asn86. Pro168 contacts substrate. His199 serves as a coordination point for heme b. Thr200 is a Ca(2+) binding site. N-linked (GlcNAc...) asparagine glycosylation is found at Asn217 and Asn243. The Ca(2+) site is built by Asp251, Thr254, and Asp259.

Belongs to the peroxidase family. Classical plant (class III) peroxidase subfamily. It depends on heme b as a cofactor. Ca(2+) is required as a cofactor.

The protein localises to the secreted. It localises to the vacuole. The enzyme catalyses 2 a phenolic donor + H2O2 = 2 a phenolic radical donor + 2 H2O. Its function is as follows. Removal of H(2)O(2), oxidation of toxic reductants, biosynthesis and degradation of lignin, suberization, auxin catabolism, response to environmental stresses such as wounding, pathogen attack and oxidative stress. These functions might be dependent on each isozyme/isoform in each plant tissue. This is Peroxidase 23 (PER23) from Arabidopsis thaliana (Mouse-ear cress).